A 647-amino-acid chain; its full sequence is DNA mismatch repair protein MutL (647 aa).

This sequence belongs to the DNA mismatch repair MutL/HexB family.

Its function is as follows. This protein is involved in the repair of mismatches in DNA. It is required for dam-dependent methyl-directed DNA mismatch repair. May act as a 'molecular matchmaker', a protein that promotes the formation of a stable complex between two or more DNA-binding proteins in an ATP-dependent manner without itself being part of a final effector complex. The chain is DNA mismatch repair protein MutL from Koribacter versatilis (strain Ellin345).